Here is a 499-residue protein sequence, read N- to C-terminus: Dipeptide and tripeptide permease A (499 aa).

Over 1 to 34 the chain is Cytoplasmic; that stretch reads MSTANKKPAESVSMNAFKQPRSFYLIFSIELWER. The chain crosses the membrane as a helical span at residues 35–55; it reads FGFYGLQGIMAVYLVKQLGMS. Residues 56–59 lie on the Periplasmic side of the membrane; the sequence is EADS. Residues 60-80 form a helical membrane-spanning segment; it reads ITLFSSFSALVYGLVAIGGWL. Topologically, residues 81–89 are cytoplasmic; sequence GDKVLGTKR. A helical transmembrane segment spans residues 90-110; the sequence is VIMLGTIVLAIGYALVAWSGH. Residue D111 is a topological domain, periplasmic. A helical membrane pass occupies residues 112–132; that stretch reads AAIVYFGMATIAVGNGLFKAN. Residues 133–153 are Cytoplasmic-facing; sequence PSALLSTCYEKDDPRLDGAFT. The helical transmembrane segment at 154 to 174 threads the bilayer; that stretch reads MYYMAINIGSFFSMLATPWLA. Over 175 to 178 the chain is Periplasmic; that stretch reads EKFG. Residues 179–199 traverse the membrane as a helical segment; that stretch reads WSVAFSLSFVGMLITLVNFIF. At 200–217 the chain is on the cytoplasmic side; sequence CKKWVKDYGSKPDFAPLH. A helical membrane pass occupies residues 218–238; sequence VGKLLATIVGIVVLVAIATWL. The Periplasmic segment spans residues 239 to 246; it reads LHNQGIAR. The helical transmembrane segment at 247 to 267 threads the bilayer; sequence LVLGVVALGIVIIFAKEAFAM. The Cytoplasmic portion of the chain corresponds to 268–274; it reads QGAARRK. Residues 275–295 form a helical membrane-spanning segment; the sequence is MIVAFILMLEAIVFFVLYQQM. Residues 296-320 lie on the Periplasmic side of the membrane; the sequence is PTSLNFFAIRNVEHSILGIAFQPEQ. A helical membrane pass occupies residues 321-341; the sequence is FQALNPFWIMIGSPILAAIYN. Over 342-350 the chain is Cytoplasmic; sequence KMGDRLPMP. Residues 351 to 371 traverse the membrane as a helical segment; the sequence is FKFTIGMLLCSGAFLVLPLGA. At 372-383 the chain is on the periplasmic side; that stretch reads KFASEAGIVSVN. The chain crosses the membrane as a helical span at residues 384-404; the sequence is WLILSYALQSIGELMISGLGL. Residues 405-414 are Cytoplasmic-facing; that stretch reads AMVAQLVPQR. The helical transmembrane segment at 415 to 435 threads the bilayer; that stretch reads LMGFIMGSWFLTTAGAAMIAG. The Periplasmic segment spans residues 436–459; the sequence is KVANLMAVPENVSDPLQSLEVYGR. The helical transmembrane segment at 460-480 threads the bilayer; that stretch reads VFMQIGIATGVIAVLMLLTAP. The Cytoplasmic segment spans residues 481–499; the sequence is LLNRMTQEDKPKETDTAHA.

Belongs to the major facilitator superfamily. Proton-dependent oligopeptide transporter (POT/PTR) (TC 2.A.17) family. DtpA subfamily.

The protein localises to the cell inner membrane. Functionally, proton-dependent permease that transports di- and tripeptides. This chain is Dipeptide and tripeptide permease A, found in Cronobacter turicensis (strain DSM 18703 / CCUG 55852 / LMG 23827 / z3032).